A 375-amino-acid polypeptide reads, in one-letter code: Serpin B5 (375 aa).

N-linked (GlcNAc...) asparagine glycosylation is found at asparagine 99, asparagine 133, asparagine 155, asparagine 188, and asparagine 361.

It belongs to the serpin family. Ov-serpin subfamily. Interacts with IRF6.

The protein resides in the secreted. The protein localises to the extracellular space. Its function is as follows. Tumor suppressor. It blocks the growth, invasion, and metastatic properties of mammary tumors. As it does not undergo the S (stressed) to R (relaxed) conformational transition characteristic of active serpins, it exhibits no serine protease inhibitory activity. This is Serpin B5 (SERPINB5) from Plecturocebus moloch (Dusky titi monkey).